We begin with the raw amino-acid sequence, 169 residues long: Phycobiliprotein beta chain (169 aa).

N72 carries the N4-methylasparagine modification. A (2R,3E)-phycocyanobilin-binding site is contributed by C82.

This sequence belongs to the phycobiliprotein family. In terms of assembly, heterodimer of an alpha and a beta chain. In terms of processing, contains one covalently linked bilin chromophore.

Its subcellular location is the cellular thylakoid membrane. Functionally, light-harvesting photosynthetic bile pigment-protein from the phycobiliprotein complex. This is a protein functionally equivalent to, but with weaker absorbance than, allophycocyanin beta chain. The chain is Phycobiliprotein beta chain (apcD) from Mastigocladus laminosus (Fischerella sp.).